The sequence spans 549 residues: Cation/acetate symporter ActP (549 aa).

A run of 13 helical transmembrane segments spans residues tryptophan 33–alanine 53, leucine 77–phenylalanine 97, glycine 103–glutamate 123, isoleucine 148–glycine 168, isoleucine 183–alanine 203, tryptophan 206–valine 226, isoleucine 262–leucine 282, glycine 303–valine 323, leucine 355–leucine 375, valine 404–glutamate 424, isoleucine 428–leucine 448, glycine 464–valine 484, and isoleucine 493–leucine 513.

The protein belongs to the sodium:solute symporter (SSF) (TC 2.A.21) family.

It is found in the cell inner membrane. Its function is as follows. Transports acetate. The chain is Cation/acetate symporter ActP from Escherichia coli O1:K1 / APEC.